A 968-amino-acid chain; its full sequence is RNA polymerase-associated protein RapA (968 aa).

A Helicase ATP-binding domain is found at 164-334 (DVGRRHAPRV…FARLRLLDPN (171 aa)). 177 to 184 (DEVGLGKT) is an ATP binding site. The DEAH box signature appears at 280–283 (DEAH). A Helicase C-terminal domain is found at 490 to 644 (RVEWLMGYLT…TCPTGRTIYD (155 aa)).

The protein belongs to the SNF2/RAD54 helicase family. RapA subfamily. As to quaternary structure, interacts with the RNAP. Has a higher affinity for the core RNAP than for the holoenzyme. Its ATPase activity is stimulated by binding to RNAP.

Transcription regulator that activates transcription by stimulating RNA polymerase (RNAP) recycling in case of stress conditions such as supercoiled DNA or high salt concentrations. Probably acts by releasing the RNAP, when it is trapped or immobilized on tightly supercoiled DNA. Does not activate transcription on linear DNA. Probably not involved in DNA repair. This Enterobacter sp. (strain 638) protein is RNA polymerase-associated protein RapA.